The chain runs to 463 residues: ATP-dependent protease ATPase subunit HslU (463 aa).

ATP contacts are provided by residues I19, 61–66 (GVGKTE), D277, E341, and R413.

The protein belongs to the ClpX chaperone family. HslU subfamily. As to quaternary structure, a double ring-shaped homohexamer of HslV is capped on each side by a ring-shaped HslU homohexamer. The assembly of the HslU/HslV complex is dependent on binding of ATP.

The protein localises to the cytoplasm. Its function is as follows. ATPase subunit of a proteasome-like degradation complex; this subunit has chaperone activity. The binding of ATP and its subsequent hydrolysis by HslU are essential for unfolding of protein substrates subsequently hydrolyzed by HslV. HslU recognizes the N-terminal part of its protein substrates and unfolds these before they are guided to HslV for hydrolysis. The polypeptide is ATP-dependent protease ATPase subunit HslU (Bacillus anthracis (strain A0248)).